Here is a 119-residue protein sequence, read N- to C-terminus: Beta-2-microglobulin (119 aa).

Residues 1–20 (MSRSVALAVLALLSLSGLEA) form the signal peptide. The region spanning 25 to 114 (PKIQVYSRHP…VTLSGPRTVK (90 aa)) is the Ig-like C1-type domain. A disulfide bridge links cysteine 45 with cysteine 100.

Belongs to the beta-2-microglobulin family. As to quaternary structure, heterodimer of an alpha chain and a beta chain. Beta-2-microglobulin is the beta-chain of major histocompatibility complex class I molecules.

It localises to the secreted. Component of the class I major histocompatibility complex (MHC). Involved in the presentation of peptide antigens to the immune system. The polypeptide is Beta-2-microglobulin (B2M) (Papio anubis (Olive baboon)).